The chain runs to 324 residues: Lactonase drp35 (324 aa).

E47, S109, G111, D129, T132, Y134, D137, N184, D235, and S236 together coordinate Ca(2+). The Proton donor role is filled by D235.

This sequence belongs to the SMP-30/CGR1 family. The cofactor is Ca(2+).

It is found in the cytoplasm. Exhibits lactonase activity. Acts in cells with perturbed membrane integrity and is possibly related to the membrane homeostasis. In Staphylococcus aureus (strain MW2), this protein is Lactonase drp35 (drp35).